The chain runs to 507 residues: Probable D-lactate dehydrogenase, mitochondrial (507 aa).

A mitochondrion-targeting transit peptide spans 1–52 (MARLLRSATWELFPWRGYCSQKAKGELCRDFVEALKAVVGGSHVSTAAVVRE). Residue Lys36 is modified to N6-acetyllysine. The FAD-binding PCMH-type domain maps to 62 to 265 (RCEPPDAVVW…TATTLRLHPA (204 aa)). Position 315 is an N6-acetyllysine (Lys315). N6-acetyllysine; alternate is present on Lys358. The residue at position 358 (Lys358) is an N6-succinyllysine; alternate. 2 positions are modified to N6-acetyllysine: Lys445 and Lys472.

Belongs to the FAD-binding oxidoreductase/transferase type 4 family. Interacts with CSRP3. The cofactor is FAD. As to expression, expressed moderately in heart and liver and at lower levels in skeletal muscle and kidney.

It localises to the mitochondrion. The enzyme catalyses (R)-lactate + 2 Fe(III)-[cytochrome c] = 2 Fe(II)-[cytochrome c] + pyruvate + 2 H(+). In terms of biological role, involved in D-lactate, but not L-lactate catabolic process. The polypeptide is Probable D-lactate dehydrogenase, mitochondrial (Homo sapiens (Human)).